Reading from the N-terminus, the 323-residue chain is Zinc finger C2HC domain-containing protein 1A (323 aa).

The C2HC/C3H-type 1 zinc-finger motif lies at 7-36 (ELRPCKICGRTFFPATLKKHVPICQKTSVK). Zn(2+) contacts are provided by cysteine 11, cysteine 14, histidine 26, and cysteine 30. The tract at residues 35–75 (VKKRKTFESSRQRAEGTDINTVKPVKPRPEPPKKQSNWKRK) is disordered. The span at 40 to 50 (TFESSRQRAEG) shows a compositional bias: basic and acidic residues. A C2HC/C3H-type 2 zinc finger spans residues 110–139 (DYVQCPYCQRRFNQNAADRHINFCKEQSAR). Cysteine 114, cysteine 117, histidine 129, and cysteine 133 together coordinate Zn(2+). The disordered stretch occupies residues 138 to 273 (ARMGQKIKGG…EAAMGYDSSD (136 aa)). Residues 208–226 (KYQTQSPAHKNSTMVTSPQ) show a composition bias toward polar residues.

This sequence belongs to the ZC2HC1 family. Requires Zn(2+) as cofactor.

This chain is Zinc finger C2HC domain-containing protein 1A (zc2hc1a), found in Xenopus laevis (African clawed frog).